A 61-amino-acid polypeptide reads, in one-letter code: Small ribosomal subunit protein uS14 (61 aa).

Cys24, Cys27, Cys40, and Cys43 together coordinate Zn(2+).

This sequence belongs to the universal ribosomal protein uS14 family. Zinc-binding uS14 subfamily. As to quaternary structure, part of the 30S ribosomal subunit. Contacts proteins S3 and S10. It depends on Zn(2+) as a cofactor.

Its function is as follows. Binds 16S rRNA, required for the assembly of 30S particles and may also be responsible for determining the conformation of the 16S rRNA at the A site. The protein is Small ribosomal subunit protein uS14 of Ureaplasma parvum serovar 3 (strain ATCC 27815 / 27 / NCTC 11736).